The primary structure comprises 563 residues: Ribulokinase (563 aa).

Belongs to the ribulokinase family.

It catalyses the reaction D-ribulose + ATP = D-ribulose 5-phosphate + ADP + H(+). The enzyme catalyses L-ribulose + ATP = L-ribulose 5-phosphate + ADP + H(+). The protein operates within carbohydrate degradation; L-arabinose degradation via L-ribulose; D-xylulose 5-phosphate from L-arabinose (bacterial route): step 2/3. The polypeptide is Ribulokinase (Halalkalibacterium halodurans (strain ATCC BAA-125 / DSM 18197 / FERM 7344 / JCM 9153 / C-125) (Bacillus halodurans)).